Reading from the N-terminus, the 740-residue chain is E3 ubiquitin-protein ligase DTX3L (740 aa).

Ala-2 is modified (N-acetylalanine). Ser-9 is modified (phosphoserine). Disordered stretches follow at residues 96-119 (NTRPQISSLTQSQAETPSGDMHQH), 195-231 (SEQKQQFSPSMTERKPLSQQERDSCISPSEPETKAEQ), and 524-551 (HETPMDIDSDDSKAASPPLKGSVSSEAS). Polar residues-rich tracts occupy residues 98 to 111 (RPQISSLTQSQAET) and 195 to 205 (SEQKQQFSPSM). At Ser-202 the chain carries Phosphoserine. Residues 206-218 (TERKPLSQQERDS) are compositionally biased toward basic and acidic residues. 3 positions are modified to phosphoserine: Ser-221, Ser-532, and Ser-539. The RING-type zinc-finger motif lies at 561–600 (CVICMDTISNKKVLPKCKHEFCAPCINKAMSYKPICPTCQ).

This sequence belongs to the Deltex family. In terms of assembly, homodimer and heterodimer. Can heterodimerize with DTX1, enhancing its ubiquitin ligase activity in vitro. Interacts (via N-terminus) with ADP ribosyltransferase PARP9/BAL1 (via PARP catalytic domain) forming a stable complex; the interaction is required to activate PARP9 but is dispensable for DTX3L catalytic activity. Forms a complex with STAT1 and PARP9 independently of IFNB1 or IFNG-mediated STAT1 'Tyr-701' phosphorylation. Found in a complex with PARP9, STAT1 and H2BC9. Found in a complex with E3 ligase ITCH and ESCRT-0 components HGS and STAM. Interacts (via C-terminus) with ITCH; the interaction is increased upon CXCL12 stimulation and inhibits ITCH catalytic activity; the interaction is direct. Interacts with HGS and STAM; the interaction brings together HGS and STAM and promotes their recruitment to early endosomes. As to quaternary structure, (Microbial infection) Interacts with encephalomyocarditis virus (EMCV) C3 protease; the interaction results in C3 protease 'Lys-48'-linked ubiquitination. (Microbial infection) Interacts with human rhinovirus (HRV) C3 protease; the interaction results in C3 protease 'Lys-48'-linked ubiquitination. In terms of processing, autoubiquitinated.

The protein resides in the cytoplasm. It localises to the nucleus. It is found in the early endosome membrane. The protein localises to the lysosome membrane. The catalysed reaction is S-ubiquitinyl-[E2 ubiquitin-conjugating enzyme]-L-cysteine + [acceptor protein]-L-lysine = [E2 ubiquitin-conjugating enzyme]-L-cysteine + N(6)-ubiquitinyl-[acceptor protein]-L-lysine.. It functions in the pathway protein modification; protein ubiquitination. Binding to PARP9 enhances DTX3L catalytic activity. E3 ubiquitin-protein ligase which, in association with ADP-ribosyltransferase PARP9, plays a role in DNA damage repair and in interferon-mediated antiviral responses. Monoubiquitinates several histones, including histone H2A, H2B, H3 and H4. In response to DNA damage, mediates monoubiquitination of 'Lys-91' of histone H4 (H4K91ub1). The exact role of H4K91ub1 in DNA damage response is still unclear but it may function as a licensing signal for additional histone H4 post-translational modifications such as H4 'Lys-20' methylation (H4K20me). PARP1-dependent PARP9-DTX3L-mediated ubiquitination promotes the rapid and specific recruitment of 53BP1/TP53BP1, UIMC1/RAP80, and BRCA1 to DNA damage sites. By monoubiquitinating histone H2B H2BC9/H2BJ and thereby promoting chromatin remodeling, positively regulates STAT1-dependent interferon-stimulated gene transcription and thus STAT1-mediated control of viral replication. Independently of its catalytic activity, promotes the sorting of chemokine receptor CXCR4 from early endosome to lysosome following CXCL12 stimulation by reducing E3 ligase ITCH activity and thus ITCH-mediated ubiquitination of endosomal sorting complex required for transport ESCRT-0 components HGS and STAM. In addition, required for the recruitment of HGS and STAM to early endosomes. In association with PARP9, plays a role in antiviral responses by mediating 'Lys-48'-linked ubiquitination of encephalomyocarditis virus (EMCV) and human rhinovirus (HRV) C3 proteases and thus promoting their proteasomal-mediated degradation. The sequence is that of E3 ubiquitin-protein ligase DTX3L (DTX3L) from Homo sapiens (Human).